Reading from the N-terminus, the 100-residue chain is Putative antiporter subunit mnhF2 (100 aa).

3 consecutive transmembrane segments (helical) span residues Phe5–Leu25, Val38–Asn60, and Leu65–Gly87.

It belongs to the CPA3 antiporters (TC 2.A.63) subunit F family. May form a heterooligomeric complex that consists of seven subunits: mnhA2, mnhB2, mnhC2, mnhD2, mnhE2, mnhF2 and mnhG2.

Its subcellular location is the cell membrane. The chain is Putative antiporter subunit mnhF2 (mnhF2) from Staphylococcus epidermidis (strain ATCC 35984 / DSM 28319 / BCRC 17069 / CCUG 31568 / BM 3577 / RP62A).